We begin with the raw amino-acid sequence, 323 residues long: Aspartate carbamoyltransferase catalytic subunit (323 aa).

The carbamoyl phosphate site is built by R55 and T56. K83 contributes to the L-aspartate binding site. Carbamoyl phosphate is bound by residues R105, H133, and Q136. The L-aspartate site is built by R166 and R220. The carbamoyl phosphate site is built by G261 and P262.

The protein belongs to the aspartate/ornithine carbamoyltransferase superfamily. ATCase family. Heterododecamer (2C3:3R2) of six catalytic PyrB chains organized as two trimers (C3), and six regulatory PyrI chains organized as three dimers (R2).

The catalysed reaction is carbamoyl phosphate + L-aspartate = N-carbamoyl-L-aspartate + phosphate + H(+). Its pathway is pyrimidine metabolism; UMP biosynthesis via de novo pathway; (S)-dihydroorotate from bicarbonate: step 2/3. Catalyzes the condensation of carbamoyl phosphate and aspartate to form carbamoyl aspartate and inorganic phosphate, the committed step in the de novo pyrimidine nucleotide biosynthesis pathway. The protein is Aspartate carbamoyltransferase catalytic subunit of Acidothermus cellulolyticus (strain ATCC 43068 / DSM 8971 / 11B).